The following is a 552-amino-acid chain: CTP synthase (552 aa).

An amidoligase domain region spans residues 1–270 (MTKYVFVTGG…DRIICEELKL (270 aa)). Ser-13 provides a ligand contact to CTP. Ser-13 is a binding site for UTP. ATP is bound by residues 14 to 19 (SLGKGI) and Asp-71. The Mg(2+) site is built by Asp-71 and Glu-144. Residues 151 to 153 (DIE), 191 to 196 (KTKPTQ), and Lys-227 each bind CTP. Residues 191 to 196 (KTKPTQ) and Lys-227 contribute to the UTP site. A Glutamine amidotransferase type-1 domain is found at 295 to 547 (TIGMVGKYVD…VEAALANKQA (253 aa)). Position 356 (Gly-356) interacts with L-glutamine. Cys-383 serves as the catalytic Nucleophile; for glutamine hydrolysis. L-glutamine contacts are provided by residues 384-387 (LGMQ), Glu-407, and Arg-473. Active-site residues include His-520 and Glu-522.

The protein belongs to the CTP synthase family. In terms of assembly, homotetramer.

The catalysed reaction is UTP + L-glutamine + ATP + H2O = CTP + L-glutamate + ADP + phosphate + 2 H(+). It catalyses the reaction L-glutamine + H2O = L-glutamate + NH4(+). The enzyme catalyses UTP + NH4(+) + ATP = CTP + ADP + phosphate + 2 H(+). It participates in pyrimidine metabolism; CTP biosynthesis via de novo pathway; CTP from UDP: step 2/2. Its activity is regulated as follows. Allosterically activated by GTP, when glutamine is the substrate; GTP has no effect on the reaction when ammonia is the substrate. The allosteric effector GTP functions by stabilizing the protein conformation that binds the tetrahedral intermediate(s) formed during glutamine hydrolysis. Inhibited by the product CTP, via allosteric rather than competitive inhibition. Catalyzes the ATP-dependent amination of UTP to CTP with either L-glutamine or ammonia as the source of nitrogen. Regulates intracellular CTP levels through interactions with the four ribonucleotide triphosphates. The protein is CTP synthase of Burkholderia ambifaria (strain MC40-6).